Reading from the N-terminus, the 692-residue chain is DNA ligase (692 aa).

NAD(+)-binding positions include 40–44, 89–90, and Glu-121; these read DAAYD and SL. Lys-123 functions as the N6-AMP-lysine intermediate in the catalytic mechanism. NAD(+) is bound by residues Arg-144, Glu-181, Lys-297, and Lys-321. Positions 415, 417, 439, and 445 each coordinate Zn(2+). The BRCT domain occupies 614-692; sequence KTDTAVAGKT…EDEWLEMVGS (79 aa).

It belongs to the NAD-dependent DNA ligase family. LigA subfamily. The cofactor is Mg(2+). Mn(2+) serves as cofactor.

It carries out the reaction NAD(+) + (deoxyribonucleotide)n-3'-hydroxyl + 5'-phospho-(deoxyribonucleotide)m = (deoxyribonucleotide)n+m + AMP + beta-nicotinamide D-nucleotide.. Its function is as follows. DNA ligase that catalyzes the formation of phosphodiester linkages between 5'-phosphoryl and 3'-hydroxyl groups in double-stranded DNA using NAD as a coenzyme and as the energy source for the reaction. It is essential for DNA replication and repair of damaged DNA. This chain is DNA ligase, found in Phenylobacterium zucineum (strain HLK1).